The primary structure comprises 329 residues: Malate dehydrogenase (329 aa).

12–18 lines the NAD(+) pocket; it reads GAAGQIG. Residues Arg-95 and Arg-101 each contribute to the substrate site. NAD(+) contacts are provided by residues Asn-108, Gln-115, and 132–134; that span reads VGN. Substrate-binding residues include Asn-134 and Arg-165. His-190 functions as the Proton acceptor in the catalytic mechanism.

Belongs to the LDH/MDH superfamily. MDH type 2 family.

The enzyme catalyses (S)-malate + NAD(+) = oxaloacetate + NADH + H(+). Its function is as follows. Catalyzes the reversible oxidation of malate to oxaloacetate. This is Malate dehydrogenase from Ralstonia nicotianae (strain ATCC BAA-1114 / GMI1000) (Ralstonia solanacearum).